A 111-amino-acid chain; its full sequence is GDAAKGANVAKSCGTCHSFEQGGAKKQGPNLFGITTRGPGKAEGFNYSPSYKAAAAKGFAWDAATLQDYITDPTAFLSNKTGDAAARDKMTFKLAKPDERADVIAYLATLK.

Heme c-binding residues include Cys13, Cys16, His17, and Met90.

Post-translationally, binds 1 heme c group covalently per subunit.

The protein is Cytochrome c-550 of Novispirillum itersonii (Aquaspirillum itersonii).